The primary structure comprises 581 residues: MITRLSHLFLRTLRDDPSDAEVASHKLLVRAGYVRRIAPGVYSWLPLGLRVLREVERVVREEMNAIGGQEILLPALLPRDPYEASNRWTEYGPNLFRLKDRKGNDYMLGPTHEELFALTVKGEYNSYKDFPVTLYQVQTKYRDEERPRAGILRGREFLMKDSYSFDLSDEGLTESYQAHRGAYEKIFTRLGVKYVIVSATSGAMGGSASEEFLAESEIGEDTYVRCLESGYAANVEAVKTVVPDSIPFDGLPEAKVYDTANTPTIDTLVDWANGADLGRTITAADTLKNIMVKTRLPGGEWELLGIGIPGDREVDEKRLEASLEPAEFVMITETDFKNNPFLAKGYIGPKALQANGVRYLVDPRVVDGTSWITGADEDGKHVVGLVAGRDFTPDGTIEAAEVRDGDASPDGAGTLVSARGIEIGHVFQLGRKYTDVFTVDVLAENGKPVRPTMGSYGVGVSRLVAVIAEQHHDEKGLRWPAEVSPADVYLVIANKDETAREGAEGLAAQLDRAGLEVILDDRKASPGVKFKDSELIGVPLIVVVGRGWADGKVEIRDRFTGESREIDADSAIEAIISAVRG.

Belongs to the class-II aminoacyl-tRNA synthetase family. ProS type 1 subfamily. Homodimer.

It is found in the cytoplasm. The catalysed reaction is tRNA(Pro) + L-proline + ATP = L-prolyl-tRNA(Pro) + AMP + diphosphate. In terms of biological role, catalyzes the attachment of proline to tRNA(Pro) in a two-step reaction: proline is first activated by ATP to form Pro-AMP and then transferred to the acceptor end of tRNA(Pro). As ProRS can inadvertently accommodate and process non-cognate amino acids such as alanine and cysteine, to avoid such errors it has two additional distinct editing activities against alanine. One activity is designated as 'pretransfer' editing and involves the tRNA(Pro)-independent hydrolysis of activated Ala-AMP. The other activity is designated 'posttransfer' editing and involves deacylation of mischarged Ala-tRNA(Pro). The misacylated Cys-tRNA(Pro) is not edited by ProRS. The chain is Proline--tRNA ligase from Rhodococcus erythropolis (strain PR4 / NBRC 100887).